Here is a 357-residue protein sequence, read N- to C-terminus: Cytosolic Fe-S cluster assembly factor NAR1 (357 aa).

Residues Cys-14, Cys-28, Cys-31, Cys-34, Cys-129, Cys-172, Cys-297, and Cys-301 each contribute to the [4Fe-4S] cluster site.

It belongs to the NARF family.

In terms of biological role, component of the cytosolic Fe/S protein assembly machinery. May play a role in the transfer of pre-assembled Fe/S clusters to target apoproteins. The polypeptide is Cytosolic Fe-S cluster assembly factor NAR1 (NAR1) (Encephalitozoon cuniculi (strain GB-M1) (Microsporidian parasite)).